A 559-amino-acid chain; its full sequence is Potassium-transporting ATPase potassium-binding subunit (559 aa).

A run of 12 helical transmembrane segments spans residues 6 to 26, 63 to 83, 131 to 151, 173 to 193, 253 to 273, 283 to 303, 327 to 347, 356 to 376, 379 to 399, 416 to 436, 484 to 504, and 524 to 544; these read FLLIASFLLLLFLLARPLGNV, LLAILLLNVFGLFVLFAMLML, VGLTVQNFLSAASGIAVIFAL, ITLWVLLPISLVIALFFIQQG, FVQMLAIFLIPAALCFAFGDV, LLWAMSLIFVVCAALVMWAEW, FGILASSLYAVVTTAASCGAV, ALGGMIPLWLMQIGEVVFGGV, GLYGMLLFVLLAVFIAGLMIG, LTALAILVTPALVLMGTALAL, LLAFCMFVGRFGVIVPVMAIA, and GALFVGLLIGTVLLVGALTFI.

Belongs to the KdpA family. In terms of assembly, the system is composed of three essential subunits: KdpA, KdpB and KdpC.

The protein localises to the cell inner membrane. Its function is as follows. Part of the high-affinity ATP-driven potassium transport (or Kdp) system, which catalyzes the hydrolysis of ATP coupled with the electrogenic transport of potassium into the cytoplasm. This subunit binds the periplasmic potassium ions and delivers the ions to the membrane domain of KdpB through an intramembrane tunnel. In Enterobacter sp. (strain 638), this protein is Potassium-transporting ATPase potassium-binding subunit.